The following is a 377-amino-acid chain: Glutamate 5-kinase (377 aa).

Lysine 15 contacts ATP. Positions 56, 143, and 155 each coordinate substrate. 175–176 (SD) contributes to the ATP binding site. The PUA domain maps to 281 to 358 (KGTLTIDAGA…PDVLIILGIS (78 aa)).

It belongs to the glutamate 5-kinase family.

The protein resides in the cytoplasm. It carries out the reaction L-glutamate + ATP = L-glutamyl 5-phosphate + ADP. Its pathway is amino-acid biosynthesis; L-proline biosynthesis; L-glutamate 5-semialdehyde from L-glutamate: step 1/2. Functionally, catalyzes the transfer of a phosphate group to glutamate to form L-glutamate 5-phosphate. This Rhodopseudomonas palustris (strain BisA53) protein is Glutamate 5-kinase.